We begin with the raw amino-acid sequence, 200 residues long: MLEIVLASQNSSKLAEMQELLRDLEIKFIPQTEFSVPDIEETGSTFVENAIIKARHAAKQTGLPALADDSGLTIAALNSAPGVFSSRYAGKNATDAERIQKVLEALEAADDSDRSASFHCVIALMENENDPAPLICHGVWEGEIAREPRGKNGFGYDPIFYVPSHQRTAAELDPQEKNAISHRGQALEQLSTVLTEAFLV.

8–13 (SQNSSK) provides a ligand contact to substrate. Mg(2+)-binding residues include Glu-40 and Asp-69. The active-site Proton acceptor is Asp-69. Residues Ser-70, 154 to 157 (FGYD), Lys-177, and 182 to 183 (HR) each bind substrate.

The protein belongs to the HAM1 NTPase family. Homodimer. Mg(2+) is required as a cofactor.

The catalysed reaction is XTP + H2O = XMP + diphosphate + H(+). The enzyme catalyses dITP + H2O = dIMP + diphosphate + H(+). It catalyses the reaction ITP + H2O = IMP + diphosphate + H(+). Pyrophosphatase that catalyzes the hydrolysis of nucleoside triphosphates to their monophosphate derivatives, with a high preference for the non-canonical purine nucleotides XTP (xanthosine triphosphate), dITP (deoxyinosine triphosphate) and ITP. Seems to function as a house-cleaning enzyme that removes non-canonical purine nucleotides from the nucleotide pool, thus preventing their incorporation into DNA/RNA and avoiding chromosomal lesions. The sequence is that of dITP/XTP pyrophosphatase from Coxiella burnetii (strain RSA 493 / Nine Mile phase I).